Reading from the N-terminus, the 878-residue chain is Alanine--tRNA ligase (878 aa).

H562, H566, C670, and H674 together coordinate Zn(2+).

The protein belongs to the class-II aminoacyl-tRNA synthetase family. Zn(2+) is required as a cofactor.

The protein localises to the cytoplasm. It carries out the reaction tRNA(Ala) + L-alanine + ATP = L-alanyl-tRNA(Ala) + AMP + diphosphate. Its function is as follows. Catalyzes the attachment of alanine to tRNA(Ala) in a two-step reaction: alanine is first activated by ATP to form Ala-AMP and then transferred to the acceptor end of tRNA(Ala). Also edits incorrectly charged Ser-tRNA(Ala) and Gly-tRNA(Ala) via its editing domain. This Acinetobacter baylyi (strain ATCC 33305 / BD413 / ADP1) protein is Alanine--tRNA ligase.